The primary structure comprises 78 residues: Beta-defensin 12 (78 aa).

The first 27 residues, 1 to 27, serve as a signal peptide directing secretion; that stretch reads MALSREVFYFGFALFFIVVELPSGSWA. 3 disulfide bridges follow: Cys-46–Cys-73, Cys-53–Cys-67, and Cys-57–Cys-74.

This sequence belongs to the beta-defensin family. Only expressed in epididymis (caput, corpus and cauda).

It localises to the secreted. In terms of biological role, has antibacterial activity. This chain is Beta-defensin 12 (Defb12), found in Mus musculus (Mouse).